The following is a 515-amino-acid chain: Cytochrome P450 1A2 (515 aa).

S69 is a glycosylation site (O-linked (GlcNAc) serine). A substrate-binding site is contributed by F226. Heme is bound at residue C458.

The protein belongs to the cytochrome P450 family. Interacts with PGRMC1; the interaction requires PGRMC1 homodimerization. Requires heme as cofactor.

It localises to the endoplasmic reticulum membrane. The protein resides in the microsome membrane. The catalysed reaction is an organic molecule + reduced [NADPH--hemoprotein reductase] + O2 = an alcohol + oxidized [NADPH--hemoprotein reductase] + H2O + H(+). It catalyses the reaction 17beta-estradiol + reduced [NADPH--hemoprotein reductase] + O2 = 2-hydroxy-17beta-estradiol + oxidized [NADPH--hemoprotein reductase] + H2O + H(+). The enzyme catalyses 17beta-estradiol + reduced [NADPH--hemoprotein reductase] + O2 = 4-hydroxy-17beta-estradiol + oxidized [NADPH--hemoprotein reductase] + H2O + H(+). It carries out the reaction estrone + reduced [NADPH--hemoprotein reductase] + O2 = 2-hydroxyestrone + oxidized [NADPH--hemoprotein reductase] + H2O + H(+). The catalysed reaction is estrone + reduced [NADPH--hemoprotein reductase] + O2 = 4-hydroxyestrone + oxidized [NADPH--hemoprotein reductase] + H2O + H(+). It catalyses the reaction cholesterol + reduced [NADPH--hemoprotein reductase] + O2 = 25-hydroxycholesterol + oxidized [NADPH--hemoprotein reductase] + H2O + H(+). The enzyme catalyses all-trans-retinol + reduced [NADPH--hemoprotein reductase] + O2 = all-trans-retinal + oxidized [NADPH--hemoprotein reductase] + 2 H2O + H(+). It carries out the reaction all-trans-retinal + reduced [NADPH--hemoprotein reductase] + O2 = all-trans-retinoate + oxidized [NADPH--hemoprotein reductase] + H2O + 2 H(+). The catalysed reaction is (5Z,8Z,11Z,14Z)-eicosatetraenoate + reduced [NADPH--hemoprotein reductase] + O2 = (14R,15S)-epoxy-(5Z,8Z,11Z)-eicosatrienoate + oxidized [NADPH--hemoprotein reductase] + H2O + H(+). It catalyses the reaction (5Z,8Z,11Z,14Z)-eicosatetraenoate + reduced [NADPH--hemoprotein reductase] + O2 = (14S,15R)-epoxy-(5Z,8Z,11Z)-eicosatrienoate + oxidized [NADPH--hemoprotein reductase] + H2O + H(+). The enzyme catalyses (5Z,8Z,11Z,14Z,17Z)-eicosapentaenoate + reduced [NADPH--hemoprotein reductase] + O2 = (17R,18S)-epoxy-(5Z,8Z,11Z,14Z)-eicosatetraenoate + oxidized [NADPH--hemoprotein reductase] + H2O + H(+). It carries out the reaction (4Z,7Z,10Z,13Z,16Z,19Z)-docosahexaenoate + reduced [NADPH--hemoprotein reductase] + O2 = (19R,20S)-epoxy-(4Z,7Z,10Z,13Z,16Z)-docosapentaenoate + oxidized [NADPH--hemoprotein reductase] + H2O + H(+). The catalysed reaction is (5S)-hydroperoxy-(6E,8Z,11Z,14Z)-eicosatetraenoate = 5-oxo-(6E,8Z,11Z,14Z)-eicosatetraenoate + H2O. It catalyses the reaction (12S)-hydroperoxy-(5Z,8Z,10E,14Z)-eicosatetraenoate = 12-oxo-(5Z,8Z,10E,14Z)-eicosatetraenoate + H2O. The enzyme catalyses (15S)-hydroperoxy-(5Z,8Z,11Z,13E)-eicosatetraenoate = 15-oxo-(5Z,8Z,11Z,13E)-eicosatetraenoate + H2O. It carries out the reaction (13S)-hydroperoxy-(9Z,11E)-octadecadienoate = 13-oxo-(9Z,11E)-octadecadienoate + H2O. The catalysed reaction is (5Z,8Z,11Z,14Z)-eicosatetraenoate + reduced [NADPH--hemoprotein reductase] + O2 = 13-hydroxy-(5Z,8Z,11Z,14Z)-eicosatetraenoate + oxidized [NADPH--hemoprotein reductase] + H2O + H(+). It catalyses the reaction (5Z,8Z,11Z,14Z)-eicosatetraenoate + reduced [NADPH--hemoprotein reductase] + O2 = 19-hydroxy-(5Z,8Z,11Z,14Z)-eicosatetraenoate + oxidized [NADPH--hemoprotein reductase] + H2O + H(+). The enzyme catalyses (9Z,12Z)-octadecadienoate + reduced [NADPH--hemoprotein reductase] + O2 = 11-hydroxy-(9Z,12Z)-octadecadienoate + oxidized [NADPH--hemoprotein reductase] + H2O + H(+). The protein operates within cofactor metabolism; retinol metabolism. Its pathway is steroid metabolism; cholesterol metabolism. It participates in lipid metabolism; arachidonate metabolism. A cytochrome P450 monooxygenase involved in the metabolism of various endogenous substrates, including fatty acids, steroid hormones and vitamins. Mechanistically, uses molecular oxygen inserting one oxygen atom into a substrate, and reducing the second into a water molecule, with two electrons provided by NADPH via cytochrome P450 reductase (NADPH--hemoprotein reductase). Catalyzes the hydroxylation of carbon-hydrogen bonds. Exhibits high catalytic activity for the formation of hydroxyestrogens from estrone (E1) and 17beta-estradiol (E2), namely 2-hydroxy E1 and E2. Metabolizes cholesterol toward 25-hydroxycholesterol, a physiological regulator of cellular cholesterol homeostasis. May act as a major enzyme for all-trans retinoic acid biosynthesis in the liver. Catalyzes two successive oxidative transformation of all-trans retinol to all-trans retinal and then to the active form all-trans retinoic acid. Primarily catalyzes stereoselective epoxidation of the last double bond of polyunsaturated fatty acids (PUFA), displaying a strong preference for the (R,S) stereoisomer. Catalyzes bisallylic hydroxylation and omega-1 hydroxylation of PUFA. May also participate in eicosanoids metabolism by converting hydroperoxide species into oxo metabolites (lipoxygenase-like reaction, NADPH-independent). Plays a role in the oxidative metabolism of xenobiotics. Catalyzes the N-hydroxylation of heterocyclic amines and the O-deethylation of phenacetin. Metabolizes caffeine via N3-demethylation. The chain is Cytochrome P450 1A2 (CYP1A2) from Cavia porcellus (Guinea pig).